We begin with the raw amino-acid sequence, 527 residues long: (3S)-3-amino-3-(3-chloro-4-hydroxyphenyl)propanoyl-[peptidyl-carrier protein SgcC2] monooxygenase (527 aa).

The segment covering 1–10 (MPHGAEREAS) has biased composition (basic and acidic residues). The tract at residues 1 to 22 (MPHGAEREASPAEESAGTRPLT) is disordered. Residues 161–163 (HAF), 167–170 (PVDR), and threonine 202 contribute to the FAD site.

This sequence belongs to the FADH(2)-utilizing monooxygenase family. Homotetramer.

The enzyme catalyses (3S)-3-amino-3-(3-chloro-4-hydroxyphenyl)propanoyl-[SgcC2 peptidyl-carrier protein] + FADH2 + O2 = (3S)-3-amino-3-(3-chloro-4,5-dihydroxyphenyl)propanoyl-[SgcC2 peptidyl-carrier protein] + FAD + H2O + H(+). It participates in antibiotic biosynthesis. With respect to regulation, the SgcE6-SgcC hydroxylation activity decreases in the presence of excess FAD. Oxygenase component of a two-component system involved in the biosynthesis of the enediyne antitumor antibiotic C-1027. Uses FADH(2) supplied by SgcE6 to catalyze the C-5 hydroxylation of (S)-3-chloro-beta-tyrosyl-S-SgcC2. Can also efficiently catalyze the regioselective hydroxylation of other 3-substituted beta-tyrosyl-S-SgcC2 analogs, including the bromo-, iodo-, fluoro-, and methyl-substituted analogs, but does not accept 3-hydroxy-beta-tyrosyl-S-SgcC2 as a substrate. Is only active with SgcC2 (peptidyl carrier protein)-tethered substrates. This chain is (3S)-3-amino-3-(3-chloro-4-hydroxyphenyl)propanoyl-[peptidyl-carrier protein SgcC2] monooxygenase, found in Streptomyces globisporus.